A 300-amino-acid chain; its full sequence is Soluble inorganic pyrophosphatase 6, chloroplastic (300 aa).

The transit peptide at 1–66 directs the protein to the chloroplast; it reads MAATRVLTAA…CSAIYNPQVK (66 aa). Arg140 contributes to the diphosphate binding site. Catalysis depends on Tyr142, which acts as the Proton donor. Mg(2+)-binding residues include Asp173, Asp178, and Asp210.

It belongs to the PPase family. Mg(2+) serves as cofactor. As to expression, expressed in all tissues tested. Highest expression in flowers, leaves and roots. Lower levels of expression in siliques, stems, ovary, stigma and pollen.

The protein localises to the plastid. It localises to the chloroplast stroma. The enzyme catalyses diphosphate + H2O = 2 phosphate + H(+). Inhibited by NaF. This Arabidopsis thaliana (Mouse-ear cress) protein is Soluble inorganic pyrophosphatase 6, chloroplastic.